A 463-amino-acid chain; its full sequence is Cysteine--tRNA ligase (463 aa).

C28 is a binding site for Zn(2+). The 'HIGH' region motif lies at 30 to 40 (ITPYDLCHIGH). Residues C211, H236, and E240 each coordinate Zn(2+). The 'KMSKS' region motif lies at 268–272 (KMSKS). Residue K271 participates in ATP binding.

It belongs to the class-I aminoacyl-tRNA synthetase family. Monomer. It depends on Zn(2+) as a cofactor.

It localises to the cytoplasm. It catalyses the reaction tRNA(Cys) + L-cysteine + ATP = L-cysteinyl-tRNA(Cys) + AMP + diphosphate. The sequence is that of Cysteine--tRNA ligase from Wigglesworthia glossinidia brevipalpis.